A 566-amino-acid polypeptide reads, in one-letter code: MQITNKIHFRNIRGDIFGGLTAAVIALPMALAFGVASGAGAEAGLWGAVLVGFFAALFGGTPTLISEPTGPMTVVMTAVIAHFTASAATPEEGLAIAFTVVMMAGVFQIIFGSLKLGKYVTMMPYTVISGFMSGIGIILVILQLAPFLGQASPGGGVIGTLQNLPTLLSNIQPGETALALGTVAIIWFMPEKFKKVIPPQLVALVLGTVIAFFVFPPEVSDLRRIGEIRAGFPELVRPSFSPVEFQRMILDAAVLGMLGCIDALLTSVVADSLTRTEHNSNKELIGQGLGNLFSGLFGGIAGAGATMGTVVNIQSGGRTALSGLVRAFVLLVVILGAASLTATIPLAVLAGIAFKVGVDIIDWSFLKRAHEISPKGALIMYGVILLTVLVDLIVAVGVGVFVANVLTIERMSNLQSEKVQTVSDADDNIRLTTTEKRWLDEGQGRVLLFQLSGPMIFGVAKAIAREHNAMGDCDALVFDIGEVPHMGVTASLALENAIEEALDKERQVYIVGAAGQTRRRLEKLKLFKRVPPDKCLMSREEALKNAVLGIYPHLADGVTAPSSEMG.

The Cytoplasmic segment spans residues M1–D15. The chain crosses the membrane as a helical span at residues I16–A36. The Periplasmic portion of the chain corresponds to S37 to E42. A helical membrane pass occupies residues A43–T63. A topological domain (cytoplasmic) is located at residue L64. Residues I65–A85 traverse the membrane as a helical segment. Residue T69 coordinates hydrogencarbonate. Residues S86 to G93 are Periplasmic-facing. The chain crosses the membrane as a helical span at residues L94–L114. The Cytoplasmic portion of the chain corresponds to K115–T126. Residues V127–F147 traverse the membrane as a helical segment. Residues L148–S169 lie on the Periplasmic side of the membrane. A helical membrane pass occupies residues N170–P190. At E191–V196 the chain is on the cytoplasmic side. A helical membrane pass occupies residues I197–P217. Over E218–R247 the chain is Periplasmic. Residues M248–V268 traverse the membrane as a helical segment. The Na(+) site is built by D262, T266, and G304. Topologically, residues V269–R318 are cytoplasmic. A305 serves as a coordination point for hydrogencarbonate. Residue T306 coordinates Na(+). Residues T319–S339 traverse the membrane as a helical segment. A topological domain (periplasmic) is located at residue L340. The chain crosses the membrane as a helical span at residues T341–I361. The Cytoplasmic segment spans residues D362–E371. The chain crosses the membrane as a helical span at residues I372–L392. I393 is a topological domain (periplasmic). Residues V394–L414 form a helical membrane-spanning segment. Residues Q415–G566 lie on the Cytoplasmic side of the membrane. Residues K436 to A546 form the STAS domain.

This sequence belongs to the SLC26A/SulP transporter (TC 2.A.53) family.

It localises to the cell inner membrane. Low/medium affinity, Na(+)-dependent bicarbonate transporter. The protein is Bicarbonate transporter BicA (bicA) of Picosynechococcus sp. (strain ATCC 27264 / PCC 7002 / PR-6) (Agmenellum quadruplicatum).